Reading from the N-terminus, the 153-residue chain is Ribosome maturation factor RimP (153 aa).

The protein belongs to the RimP family.

Its subcellular location is the cytoplasm. Functionally, required for maturation of 30S ribosomal subunits. The protein is Ribosome maturation factor RimP of Acidithiobacillus ferrooxidans (strain ATCC 53993 / BNL-5-31) (Leptospirillum ferrooxidans (ATCC 53993)).